A 684-amino-acid chain; its full sequence is Hydroxyproline O-galactosyltransferase GALT2 (684 aa).

At 1 to 22 the chain is on the cytoplasmic side; the sequence is MKRVKSESFRGVYSSRRFKLSH. A helical; Signal-anchor for type II membrane protein membrane pass occupies residues 23–43; the sequence is FLLAIAGFYLVFLAFKFPHFI. Residues 44–684 are Lumenal-facing; it reads EMVAMLSGDT…KGRPQCCNFR (641 aa). The segment at 80-102 is disordered; it reads KLEDEDHQSGPSTTQKVSPEEKI. 3 N-linked (GlcNAc...) asparagine glycosylation sites follow: Asn103, Asn127, and Asn162. The Galectin domain occupies 191–405; that stretch reads RIMLLPCGLA…DVDIHSIHAT (215 aa). N-linked (GlcNAc...) asparagine glycosylation is found at Asn524 and Asn632.

This sequence belongs to the glycosyltransferase 31 family. Requires Mn(2+) as cofactor. In terms of tissue distribution, expressed in stems and at lower levels in cauline leaves and siliques.

The protein localises to the golgi apparatus membrane. It functions in the pathway protein modification; protein glycosylation. Possesses hydroxyproline O-galactosyltransferase activity. Transfers galactose from UDP-galactose to hydroxyproline residues in the arabinogalactan proteins (AGPs). Is specific for AGPs containing non-contiguous peptidyl hydroxyproline residues. Utilizes UDP-galactose solely as sugar donor. The addition of galactose onto the peptidyl hydroxyproline residues in AGP core proteins represents the first committed step in arabinogalactan polysaccharide addition. AGP glycans play essential roles in both vegetative and reproductive plant growth. This is Hydroxyproline O-galactosyltransferase GALT2 from Arabidopsis thaliana (Mouse-ear cress).